The sequence spans 675 residues: uncharacterized protein (675 aa).

The next 4 membrane-spanning stretches (helical) occupy residues 2–22 (QHTF…DFFF), 397–417 (LFLL…VFIA), 448–468 (LLVA…LCCY), and 481–501 (IFVY…TYAA). Disordered stretches follow at residues 616–635 (YSPN…DIND) and 646–675 (QRMG…ELSD). The span at 665–675 (VFSESDEELSD) shows a compositional bias: acidic residues. Phosphoserine is present on serine 669.

It belongs to the 1-acyl-sn-glycerol-3-phosphate acyltransferase family.

Its subcellular location is the endoplasmic reticulum membrane. This is an uncharacterized protein from Schizosaccharomyces pombe (strain 972 / ATCC 24843) (Fission yeast).